A 154-amino-acid chain; its full sequence is Jupiter microtubule associated homolog 1 (154 aa).

Methionine 1 bears the N-acetylmethionine mark. Residues 1–19 show a composition bias toward polar residues; the sequence is MTTTTTFKGVDPNSRNSSR. A disordered region spans residues 1-154; that stretch reads MTTTTTFKGV…PGGKSSLVLG (154 aa). Residue threonine 2 is modified to N-acetylthreonine; in Hematological and neurological expressed 1 protein, N-terminally processed. 2 positions are modified to phosphoserine: serine 28 and serine 31. Residues 47–59 show a composition bias toward polar residues; it reads MASNIFGTPEENQ. Threonine 54 carries the phosphothreonine modification. Over residues 60–71 the composition is skewed to low complexity; sequence ASWAKSAGAKSS. Phosphoserine is present on residues serine 71, serine 80, serine 87, serine 88, and serine 92. Residues 80 to 91 show a composition bias toward polar residues; sequence SGLQRRNSSEAS. The segment covering 96-108 has biased composition (basic and acidic residues); that stretch reads LDLKGEGDIHENV. Positions 125-138 are enriched in pro residues; that stretch reads PAAPVPSPVAPAPV. A Phosphoserine modification is found at serine 131. Lysine 148 carries the post-translational modification N6-acetyllysine.

It belongs to the JUPITER family. Interacts with the complex composed, at least, of APC, CTNNB1 and GSK3B; the interaction takes place with the inactive form of GSK3B (phosphorylated at 'Ser-9'). Expressed in testis, skeletal muscle, thymus, prostate, colon, peripheral blood cells, brain and placenta.

The protein localises to the nucleus. It is found in the cytoplasm. Modulates negatively AKT-mediated GSK3B signaling. Induces CTNNB1 'Ser-33' phosphorylation and degradation through the suppression of the inhibitory 'Ser-9' phosphorylation of GSK3B, which represses the function of the APC:CTNNB1:GSK3B complex and the interaction with CDH1/E-cadherin in adherent junctions. Plays a role in the regulation of cell cycle and cell adhesion. Has an inhibitory role on AR-signaling pathway through the induction of receptor proteasomal degradation. The sequence is that of Jupiter microtubule associated homolog 1 from Homo sapiens (Human).